Here is a 71-residue protein sequence, read N- to C-terminus: U3-agatoxin-Ao1a (71 aa).

Positions 1-20 are cleaved as a signal peptide; that stretch reads MKAVIFFCLLSVMVFTVIEA. Residues 21-33 constitute a propeptide that is removed on maturation; that stretch reads VKEEGTKPAEAAR. Cystine bridges form between C35–C51, C42–C56, C50–C66, and C58–C64. S70 carries the post-translational modification Serine amide.

It belongs to the neurotoxin 07 (Beta/delta-agtx) family. 01 (aga-2) subfamily. Expressed by the venom gland.

It is found in the secreted. Functionally, insecticidal neurotoxin that modulates the insect Nav channel (DmNaV1/tipE (para/tipE)) in a unique manner, with both the activation and inactivation processes being affected. The voltage dependence of activation is shifted toward more hyperpolarized potentials (analogous to site 4 toxins) and a non-inactivating persistent sodium current is induced (site 3-like action). Interestingly, both effects take place in a voltage-dependent manner, producing a bell-shaped curve between -80 and 0 mV. Compared to beta/delta-agatoxin-1 to -3, this toxin appears to affect the insect sodium channel only weakly. The sequence is that of U3-agatoxin-Ao1a from Agelena orientalis (Funnel-web spider).